We begin with the raw amino-acid sequence, 1481 residues long: Cystic fibrosis transmembrane conductance regulator (1481 aa).

At 1-77 the chain is on the cytoplasmic side; sequence MQRSPLEKAS…KLINALRRCF (77 aa). A helical transmembrane segment spans residues 78 to 98; it reads FWRFTFYGILLYLGEVTKAVQ. The 285-residue stretch at 81–365 folds into the ABC transmembrane type-1 1 domain; the sequence is FTFYGILLYL…WAVQTWYDSL (285 aa). Residues 99–122 lie on the Extracellular side of the membrane; the sequence is PLLLGRIIASYDPDNKTERSIAIY. A helical membrane pass occupies residues 123–146; that stretch reads LGIGLCLLFIVRTLLLHPAIFGLH. At 147–195 the chain is on the cytoplasmic side; the sequence is HIGMQMRIAMFSLIYKKTLKLSSRVLDKISIGQLVSLLSNNLNKFDEGL. Residues 196–216 traverse the membrane as a helical segment; that stretch reads ALAHFVWIAPLQVALLMGLIW. The Extracellular portion of the chain corresponds to 217–222; it reads ELLQAS. Residues 223-243 form a helical membrane-spanning segment; the sequence is AFCGLGFLIVLALFQAGLGRM. At 244–298 the chain is on the cytoplasmic side; the sequence is MMKYRDQRAGKINERLVITSEMIENIQSVKAYCWEEAMEKMIENLRQTELKLTRK. Residues 299-319 traverse the membrane as a helical segment; that stretch reads AAYVRYFNSSAFFFSGFFVVF. At 320-339 the chain is on the extracellular side; that stretch reads LSVLPYALIKGIALRKIFTT. A helical membrane pass occupies residues 340–358; that stretch reads ISFCIVLRMAVTRQFPWAV. Residues 359 to 858 are Cytoplasmic-facing; that stretch reads QTWYDSLGAI…YLRYITLHKS (500 aa). ATP contacts are provided by residues tryptophan 401, serine 434, 458 to 465, and glutamine 493; that span reads GSTGAGKT. Residues 423–646 enclose the ABC transporter 1 domain; it reads NGDDNLFFSN…RPDFSSKLMG (224 aa). Residue cysteine 524 is the site of S-palmitoyl cysteine attachment. Residues serine 549 and serine 660 each carry the phosphoserine modification. Positions 654–831 are disordered R region; it reads SSERRNSILT…EEINEEDLKE (178 aa). Serine 670 is subject to Phosphoserine; by PKA. Serine 686 carries the phosphoserine modification. Lysine 688 participates in a covalent cross-link: Glycyl lysine isopeptide (Lys-Gly) (interchain with G-Cter in ubiquitin). Phosphoserine is present on residues serine 700 and serine 712. Threonine 717 is modified (phosphothreonine). Serine 737, serine 753, serine 768, serine 790, serine 795, and serine 813 each carry phosphoserine. Residues 859–879 form a helical membrane-spanning segment; it reads LIFVLIWCLVIFLAEVAASLV. In terms of domain architecture, ABC transmembrane type-1 2 spans 859 to 1155; the sequence is LIFVLIWCLV…AVNSSIDVDS (297 aa). Residues 880–918 lie on the Extracellular side of the membrane; that stretch reads LLWLLGNTRFQDKGNSTYSRNNSYAVIITNTSSYYVFYI. N-linked (GlcNAc...) asparagine glycans are attached at residues asparagine 894, asparagine 900, and asparagine 909. The discontinuously helical transmembrane segment at 919-939 threads the bilayer; that stretch reads YVGVADTLLALGFFRGLPLVH. At 940-990 the chain is on the cytoplasmic side; sequence TLITVSKILHHKMLHSVLQAPMSTLNTLKAGGILNRFSKDIAILDDLLPLT. A helical membrane pass occupies residues 991–1011; the sequence is IFDFIQLLLIVIGAIAVVSVL. Residues 1012-1013 are Extracellular-facing; that stretch reads QP. The chain crosses the membrane as a helical span at residues 1014–1034; sequence YIFLATVPVIAAFILLRAYFL. The Cytoplasmic segment spans residues 1035 to 1095; the sequence is QTSQQLKQLE…TASWFLYLST (61 aa). A helical membrane pass occupies residues 1096 to 1116; the sequence is LRWFQMRIEMIFVIFFIAVTF. At 1117–1130 the chain is on the extracellular side; that stretch reads ISILTTGEGEGTVG. A helical membrane pass occupies residues 1131–1151; sequence IILTLAMNIMSTLQWAVNSSI. Over 1152 to 1481 the chain is Cytoplasmic; sequence DVDSLMRSVS…TEEEVQETRL (330 aa). Positions 1211 to 1444 constitute an ABC transporter 2 domain; the sequence is MTIKDLTAKY…KSLFRQAISH (234 aa). ATP contacts are provided by residues tyrosine 1220 and 1245–1252; that span reads GRTGSGKS. Residues 1387–1481 are interaction with GORASP2; the sequence is RALKQAFADC…TEEEVQETRL (95 aa). Residue cysteine 1396 is the site of S-palmitoyl cysteine attachment. Phosphoserine occurs at positions 1445 and 1457. Residues 1453 to 1481 are disordered; the sequence is HRNSSKYKSRPQIASLKEETEEEVQETRL. The segment covering 1471-1481 has biased composition (acidic residues); sequence ETEEEVQETRL. A PDZ-binding motif is present at residues 1479–1481; sequence TRL.

It belongs to the ABC transporter superfamily. ABCC family. CFTR transporter (TC 3.A.1.202) subfamily. Monomer; does not require oligomerization for channel activity. May form oligomers in the membrane. Interacts with SLC26A3, SLC26A6 and NHERF1. Interacts with SHANK2. Interacts with MYO6. Interacts (via C-terminus) with GOPC (via PDZ domain); this promotes CFTR internalization and thereby decreases channel activity. Interacts with SLC4A7 through NHERF1. Found in a complex with MYO5B and RAB11A. Interacts with ANO1. Interacts with SLC26A8. Interacts with AHCYL1; the interaction increases CFTR activity. Interacts with CSE1L. The core-glycosylated form interacts with GORASP2 (via PDZ GRASP-type 1 domain) in respone to ER stress. Interacts with MARCHF2; the interaction leads to CFTR ubiqtuitination and degradation. Interacts with ADGRG2. N-glycosylated. In terms of processing, phosphorylated; cAMP treatment promotes phosphorylation and activates the channel. Dephosphorylation decreases the ATPase activity (in vitro). Phosphorylation at PKA sites activates the channel. Phosphorylation at PKC sites enhances the response to phosphorylation by PKA. Phosphorylated by AMPK; this inhibits channel activity. Post-translationally, ubiquitinated, leading to its degradation in the lysosome. Deubiquitination by USP10 in early endosomes enhances its endocytic recycling to the cell membrane. Ubiquitinated by RNF185 during ER stress. Ubiquitinated by MARCHF2.

It is found in the apical cell membrane. Its subcellular location is the early endosome membrane. It localises to the cell membrane. The protein resides in the recycling endosome membrane. The protein localises to the endoplasmic reticulum membrane. It is found in the nucleus. The enzyme catalyses ATP + H2O + closed Cl(-) channel = ADP + phosphate + open Cl(-) channel.. It catalyses the reaction chloride(in) = chloride(out). The catalysed reaction is hydrogencarbonate(in) = hydrogencarbonate(out). It carries out the reaction ATP + H2O = ADP + phosphate + H(+). Epithelial ion channel that plays an important role in the regulation of epithelial ion and water transport and fluid homeostasis. Mediates the transport of chloride ions across the cell membrane. Possesses an intrinsic ATPase activity and utilizes ATP to gate its channel; the passive flow of anions through the channel is gated by cycles of ATP binding and hydrolysis by the ATP-binding domains. The ion channel is also permeable to HCO(3)(-); selectivity depends on the extracellular chloride concentration. Exerts its function also by modulating the activity of other ion channels and transporters. Contributes to the regulation of the pH and the ion content of the epithelial fluid layer. Modulates the activity of the epithelial sodium channel (ENaC) complex, in part by regulating the cell surface expression of the ENaC complex. May regulate bicarbonate secretion and salvage in epithelial cells by regulating the transporter SLC4A7. Can inhibit the chloride channel activity of ANO1. Plays a role in the chloride and bicarbonate homeostasis during sperm epididymal maturation and capacitation. The protein is Cystic fibrosis transmembrane conductance regulator of Saimiri boliviensis boliviensis (Bolivian squirrel monkey).